Here is a 217-residue protein sequence, read N- to C-terminus: Ribosomal RNA small subunit methyltransferase G (217 aa).

S-adenosyl-L-methionine is bound by residues G78, F83, 129–130 (GE), and R146.

Belongs to the methyltransferase superfamily. RNA methyltransferase RsmG family.

Its subcellular location is the cytoplasm. The enzyme catalyses guanosine(527) in 16S rRNA + S-adenosyl-L-methionine = N(7)-methylguanosine(527) in 16S rRNA + S-adenosyl-L-homocysteine. Its function is as follows. Specifically methylates the N7 position of guanine in position 527 of 16S rRNA. This Geobacter sulfurreducens (strain ATCC 51573 / DSM 12127 / PCA) protein is Ribosomal RNA small subunit methyltransferase G.